Reading from the N-terminus, the 256-residue chain is EF-hand calcium-binding domain-containing protein 4A (256 aa).

Over residues 1 to 10 the composition is skewed to basic residues; it reads MAHLGSRRRM. The segment at 1-32 is disordered; that stretch reads MAHLGSRRRMSPGLRTRIAHRKAHRTPPSPLI. 2 consecutive EF-hand domains span residues 41–69 and 71–106; these read KAHELFQLCDKEDKGLITKRDLQRLQNEL and LTPEQLEAVFDSLDQSNNGYLTPVEFSMGLGKLLGV. Ca(2+)-binding residues include D84, S86, N88, Y90, and E95. Residues 190-235 are a coiled coil; the sequence is IRDVHHEKDTLEQALKRKETDHGREVRCLYEEMEQQIKIERERLLK.

This sequence belongs to the EFCAB4 family.

This chain is EF-hand calcium-binding domain-containing protein 4A (cracr2b), found in Xenopus tropicalis (Western clawed frog).